Here is a 765-residue protein sequence, read N- to C-terminus: Proton-coupled zinc antiporter SLC30A5 (765 aa).

At M1 the chain carries N-acetylmethionine. Residues 1-32 lie on the Cytoplasmic side of the membrane; it reads MEEKYGGDVLAGPGGGGGLGPVDVPSARLTKY. Residues 33–53 form a helical membrane-spanning segment; it reads IVLLCFTKFLKAVGLFESYDL. Over 54–56 the chain is Lumenal; that stretch reads LKA. A helical transmembrane segment spans residues 57–77; sequence VHIVQFIFILKLGTAFFMVLF. Over 78 to 98 the chain is Cytoplasmic; that stretch reads QKPFSSGKTITKHQWIKIFKH. A helical transmembrane segment spans residues 99–119; that stretch reads AVAGCIISLLWFFGLTLCGPL. Position 120 (R120) is a topological domain, lumenal. The chain crosses the membrane as a helical span at residues 121–141; it reads TLLLFEHSDIVVISLLSVLFT. Over 142 to 152 the chain is Cytoplasmic; that stretch reads SSGGGPAKTRG. A helical membrane pass occupies residues 153–173; that stretch reads AAFFIIAVICLLLFDNDDLMA. Over 174–193 the chain is Lumenal; it reads KMAEHPEGHHDSALTHMLYT. The helical transmembrane segment at 194–214 threads the bilayer; it reads AIAFLGVADHKGGVLLLVLAL. Residues 215 to 238 are Cytoplasmic-facing; sequence CCKVGFHTASRKLSVDVGGAKRLQ. Residues 239 to 259 form a helical membrane-spanning segment; it reads ALSHLVSVLLLCPWVIVLSVT. At 260 to 267 the chain is on the lumenal side; that stretch reads TESKVESW. A helical membrane pass occupies residues 268 to 288; the sequence is FSLIMPFATVIFFVMILDFYV. Residues 289–303 lie on the Cytoplasmic side of the membrane; the sequence is DSICSVKMEVSKCAR. A helical transmembrane segment spans residues 304–324; the sequence is YGSFPIFISALLFGNFWTHPI. Over 325 to 342 the chain is Lumenal; that stretch reads TDQLRAMNKAAHQESTEH. A helical transmembrane segment spans residues 343 to 363; the sequence is VLSGGVVVSAIFFILSANILS. Over 364-418 the chain is Cytoplasmic; it reads SPSKRGQKGTLIGYSPEGTPLYNFMGDAFQHSSQSIPRFIKESLKQILEESDSRQ. Residues 419–439 form a helical membrane-spanning segment; the sequence is IFYFLCLNLLFTFVELFYGVL. The segment at 420 to 640 is mediates homodimerization with SLC30A6; it reads FYFLCLNLLF…ILIFLSVVPL (221 aa). Over 440–448 the chain is Lumenal; that stretch reads TNSLGLISD. Residues 449-469 form a helical membrane-spanning segment; sequence GFHMLFDCSALVMGLFAALMS. Residues H451 and D455 each coordinate Zn(2+). Residues 470-483 are Cytoplasmic-facing; sequence RWKATRIFSYGYGR. Residues 484-504 traverse the membrane as a helical segment; it reads IEILSGFINGLFLIVIAFFVF. Residues 505–520 lie on the Lumenal side of the membrane; that stretch reads MESVARLIDPPELDTH. The helical transmembrane segment at 521-541 threads the bilayer; it reads MLTPVSVGGLIVNLIGICAFS. The segment at 542 to 578 is his-rich loop; required for zinc transport; the sequence is HAHSHAHGASQGSCHSSDHSHSHHMHGHSDHGHGHSH. Topologically, residues 542-592 are cytoplasmic; it reads HAHSHAHGASQGSCHSSDHSHSHHMHGHSDHGHGHSHGSAGGGMNANMRGV. A disordered region spans residues 551–581; the sequence is SQGSCHSSDHSHSHHMHGHSDHGHGHSHGSA. Residues 593 to 613 form a helical membrane-spanning segment; that stretch reads FLHVLADTLGSIGVIVSTVLI. Positions 595 and 599 each coordinate Zn(2+). Over 614–617 the chain is Lumenal; the sequence is EQFG. Residues 618 to 638 form a helical membrane-spanning segment; the sequence is WFIADPLCSLFIAILIFLSVV. The Cytoplasmic segment spans residues 639 to 765; it reads PLIKDACQVL…KYCKDGTYIM (127 aa).

This sequence belongs to the cation diffusion facilitator (CDF) transporter (TC 2.A.4) family. SLC30A subfamily. As to quaternary structure, heterodimer with SLC30A6/ZNT6; form a functional zinc ion transmembrane transporter. Post-translationally, could homodimerize through the formation of dityrosine bonds upon oxidative stress. In terms of tissue distribution, ubiquitously expressed. Highly expressed in pancreas, liver and kidney. Expressed abundantly in insulin-containing beta cells, undetectable in other endocrine cell types including glucagon-secreting alpha cells and most acinar cells (at protein level).

It is found in the golgi apparatus. Its subcellular location is the golgi stack membrane. The protein localises to the cytoplasmic vesicle. It localises to the COPII-coated vesicle membrane. The protein resides in the secretory vesicle membrane. It is found in the trans-Golgi network membrane. Its subcellular location is the endoplasmic reticulum membrane. The protein localises to the cell membrane. It localises to the apical cell membrane. It catalyses the reaction Zn(2+)(in) + 2 H(+)(out) = Zn(2+)(out) + 2 H(+)(in). In terms of biological role, together with SLC30A6 forms a functional proton-coupled zinc ion antiporter mediating zinc entry into the lumen of organelles along the secretory pathway. By contributing to zinc ion homeostasis within the early secretory pathway, regulates the activation and folding of enzymes like alkaline phosphatases and enzymes involved in phosphatidylinositol glycan anchor biosynthesis. Through the transport of zinc into secretory granules of pancreatic beta-cells, plays an important role in the storage and secretion of insulin. Zinc ion:proton antiporter mediating influx and efflux of zinc at the plasma membrane. The chain is Proton-coupled zinc antiporter SLC30A5 from Homo sapiens (Human).